Reading from the N-terminus, the 280-residue chain is Vacuolar protein sorting-associated protein 71 (280 aa).

Over residues 64 to 73 (RSEGDGNSIS) the composition is skewed to polar residues. Positions 64–92 (RSEGDGNSISRQDDRNSKNSHSFEERYTQ) are disordered. The span at 74 to 92 (RQDDRNSKNSHSFEERYTQ) shows a compositional bias: basic and acidic residues. The Zn(2+) site is built by Cys244, Cys247, Cys256, Cys259, Cys264, Cys268, His272, and Cys277. The HIT-type zinc finger occupies 244–277 (CSICGGYDSISSCVNCGNKICSVSCFKLHNETRC).

As to quaternary structure, belongs to the SWR1 complex at least composed of ACT1, ARP4, RVB1, RVB2, ARP6, YAF9, VPS71, VPS72, SWC3, SWC4, SWC5, SWR1 and HTZ1.

Its subcellular location is the nucleus. Its function is as follows. Participates in the catalytic exchange of histone H2A for the H2A variant HZT1, an euchromatin-specific factor, leading to chromatin remodeling and changes in transcription of targeted genes. Indirectly involved in vacuolar protein sorting. In Saccharomyces cerevisiae (strain ATCC 204508 / S288c) (Baker's yeast), this protein is Vacuolar protein sorting-associated protein 71 (VPS71).